A 125-amino-acid chain; its full sequence is Interleukin-6 (125 aa).

Cysteine 16 and cysteine 26 form a disulfide bridge.

It belongs to the IL-6 superfamily. As to quaternary structure, component of a hexamer of two molecules each of IL6, IL6R and IL6ST; first binds to IL6R to associate with the signaling subunit IL6ST. Interacts with IL6R (via the N-terminal ectodomain); this interaction may be affected by IL6R-binding with SORL1, hence decreasing IL6 cis signaling. Interacts with SORL1 (via the N-terminal ectodomain); this interaction leads to IL6 internalization and lysosomal degradation. May form a trimeric complex with the soluble SORL1 ectodomain and soluble IL6R receptor; this interaction might stabilize circulating IL6, hence promoting IL6 trans signaling.

The protein localises to the secreted. Cytokine with a wide variety of biological functions in immunity, tissue regeneration, and metabolism. Binds to IL6R, then the complex associates to the signaling subunit IL6ST/gp130 to trigger the intracellular IL6-signaling pathway. The interaction with the membrane-bound IL6R and IL6ST stimulates 'classic signaling', whereas the binding of IL6 and soluble IL6R to IL6ST stimulates 'trans-signaling'. Alternatively, 'cluster signaling' occurs when membrane-bound IL6:IL6R complexes on transmitter cells activate IL6ST receptors on neighboring receiver cells. Functionally, IL6 is a potent inducer of the acute phase response. Rapid production of IL6 contributes to host defense during infection and tissue injury, but excessive IL6 synthesis is involved in disease pathology. In the innate immune response, is synthesized by myeloid cells, such as macrophages and dendritic cells, upon recognition of pathogens through toll-like receptors (TLRs) at the site of infection or tissue injury. In the adaptive immune response, is required for the differentiation of B cells into immunoglobulin-secreting cells. Plays a major role in the differentiation of CD4(+) T cell subsets. Essential factor for the development of T follicular helper (Tfh) cells that are required for the induction of germinal-center formation. Required to drive naive CD4(+) T cells to the Th17 lineage. Also required for proliferation of myeloma cells and the survival of plasmablast cells. In terms of biological role, acts as an essential factor in bone homeostasis and on vessels directly or indirectly by induction of VEGF, resulting in increased angiogenesis activity and vascular permeability. Induces, through 'trans-signaling' and synergistically with IL1B and TNF, the production of VEGF. Involved in metabolic controls, is discharged into the bloodstream after muscle contraction increasing lipolysis and improving insulin resistance. 'Trans-signaling' in central nervous system also regulates energy and glucose homeostasis. Mediates, through GLP-1, crosstalk between insulin-sensitive tissues, intestinal L cells and pancreatic islets to adapt to changes in insulin demand. Also acts as a myokine. Plays a protective role during liver injury, being required for maintenance of tissue regeneration. Also has a pivotal role in iron metabolism by regulating HAMP/hepcidin expression upon inflammation or bacterial infection. Through activation of IL6ST-YAP-NOTCH pathway, induces inflammation-induced epithelial regeneration. The sequence is that of Interleukin-6 (IL6) from Neovison vison (American mink).